The chain runs to 489 residues: Lysine-specific permease LysP (489 aa).

Residues valine 2 to leucine 22 lie on the Cytoplasmic side of the membrane. Residues threonine 23–isoleucine 43 form a helical membrane-spanning segment. Topologically, residues serine 44–glutamine 45 are periplasmic. A helical transmembrane segment spans residues alanine 46 to methionine 66. Topologically, residues threonine 67–asparagine 105 are cytoplasmic. Residues tryptophan 106 to proline 126 traverse the membrane as a helical segment. The Periplasmic segment spans residues aspartate 127–threonine 128. The chain crosses the membrane as a helical span at residues proline 129–valine 149. Topologically, residues arginine 150 to leucine 161 are cytoplasmic. Residues isoleucine 162–phenylalanine 182 traverse the membrane as a helical segment. Topologically, residues lysine 183–glutamate 197 are periplasmic. Residues alanine 198–phenylalanine 218 traverse the membrane as a helical segment. Topologically, residues glutamine 219–glutamine 244 are cytoplasmic. A helical transmembrane segment spans residues valine 245–proline 265. Topologically, residues tyrosine 266–histidine 290 are periplasmic. A helical transmembrane segment spans residues alanine 291–alanine 311. The Cytoplasmic portion of the chain corresponds to glycine 312–arginine 346. The helical transmembrane segment at asparagine 347–asparagine 367 threads the bilayer. Topologically, residues glutamine 368 to valine 370 are periplasmic. The helical transmembrane segment at tyrosine 371–isoleucine 391 threads the bilayer. Topologically, residues serine 392–arginine 413 are cytoplasmic. A helical membrane pass occupies residues serine 414–glycine 434. Residues glutamine 435 to aspartate 446 are Periplasmic-facing. The chain crosses the membrane as a helical span at residues tryptophan 447–tyrosine 467. At lysine 468–lysine 489 the chain is on the cytoplasmic side.

It belongs to the amino acid-polyamine-organocation (APC) superfamily. Amino acid transporter (AAT) (TC 2.A.3.1) family. In terms of assembly, interacts strongly with the transcriptional activator CadC in the absence of lysine or at low lysine concentrations. Interaction is markedly attenuated under increasing lysine levels. Concomitant pH-dependent protonation of periplasmic amino acids in both proteins dissolves their electrostatic connections resulting in further destabilization of the CadC/LysP interaction. Low pH promotes oligomerization of LysP.

Its subcellular location is the cell inner membrane. The catalysed reaction is L-lysine(out) + H(+)(out) = L-lysine(in) + H(+)(in). Its function is as follows. Permease involved in lysine uptake. In addition, functions as a lysine sensor that mediates the lysine-dependent regulation of the transcriptional activator CadC. In the absence of lysine, or at low lysine concentrations, LysP inhibits CadC by an interaction with the transmembrane domain of CadC. In the presence of lysine, LysP loses its ability to interact with and inhibit CadC, and acts as a lysine permease. In Escherichia coli (strain K12), this protein is Lysine-specific permease LysP.